We begin with the raw amino-acid sequence, 898 residues long: Netrin receptor UNC5A (898 aa).

Positions 1-25 (MAVRPGLWPVLLGIVLAAWLRGSGA) are cleaved as a signal peptide. Topologically, residues 26 to 361 (QQSATVANPV…TASCPEDVAL (336 aa)) are extracellular. Residues 44 to 141 (PHFLVEPEDV…SGTTKSQKAY (98 aa)) enclose the Ig-like domain. 3 disulfide bridges follow: Cys-65-Cys-126, Cys-77-Cys-124, and Cys-170-Cys-221. Asn-107 and Asn-218 each carry an N-linked (GlcNAc...) asparagine glycan. The 84-residue stretch at 155–238 (PLAKEVSLEQ…RRRSTSAAVI (84 aa)) folds into the Ig-like C2-type domain. 2 TSP type-1 domains span residues 242-296 (NGGW…TLCP) and 298-350 (DGSW…DLCL). C-linked (Man) tryptophan glycosylation is found at Trp-245, Trp-248, and Trp-251. 3 cysteine pairs are disulfide-bonded: Cys-254–Cys-291, Cys-258–Cys-295, and Cys-269–Cys-281. 2 C-linked (Man) tryptophan glycosylation sites follow: Trp-301 and Trp-304. 3 disulfide bridges follow: Cys-310–Cys-344, Cys-314–Cys-349, and Cys-322–Cys-334. An N-linked (GlcNAc...) asparagine glycan is attached at Asn-343. A helical transmembrane segment spans residues 362–382 (YIGLVAVAVCLFLLLLALGLI). At 383 to 898 (YCRKKEGLDS…GLFTVSEAEC (516 aa)) the chain is on the cytoplasmic side. In terms of domain architecture, ZU5 spans 497–640 (NMAYGTFNFL…LGRFALVGEA (144 aa)). Residues 661–679 (SLEYNIRVYCLHDTHDALK) are interaction with DCC. A Death domain is found at 817–897 (QKIIASLDPP…AGLFTVSEAE (81 aa)).

This sequence belongs to the unc-5 family. As to quaternary structure, homodimer and homooligomer. Interacts with the cytoplasmic part of DCC. Interacts with MAGED1. Interacts with PRKCABP, possibly mediating some interaction with PKC. Interacts (via extracellular domain) with FLRT2 (via extracellular domain). Interacts (via extracellular domain) with FLRT3 (via extracellular domain). In terms of processing, phosphorylated on cytoplasmic tyrosine residues. Phosphorylated by PKC in vitro. Post-translationally, proteolytically cleaved by caspases during apoptosis. The cleavage does not take place when the receptor is associated with netrin ligand. Its cleavage by caspases is required to induce apoptosis. The two extracellular TSRs of UNC5A contain WxxWxxWxxC motifs that can be C-mannosylated on all tryptophans. DPY19L1 preferentially mannosylates the first two tryptophans and DPY19L3 prefers the third. C-mannosylation by DPY19L1 is required for transport of UNC5A from the endoplasmic reticulum to the cell surface. Mainly expressed in regions of differentiating neurons. Expressed at early stages of neural tube development in the ventral spinal cord. In developing hindbrain, it colocalizes with a number of cranial motor neuron subpopulations from embryonic E11 to E14, while DCC is expressed by motor neurons at E12. Also expressed in non-neural structures, such as the basal plane of the hindbrain and midbrain, in the developing hypothalamus, thalamus and in the pallidum.

The protein resides in the cell membrane. Its subcellular location is the membrane raft. The protein localises to the cell projection. It is found in the neuron projection. In terms of biological role, receptor for netrin required for axon guidance. Functions in the netrin signaling pathway and promotes neurite outgrowth in response to NTN1. Mediates axon repulsion of neuronal growth cones in the developing nervous system in response to netrin. Axon repulsion in growth cones may be mediated by its association with DCC that may trigger signaling for repulsion. It also acts as a dependence receptor required for apoptosis induction when not associated with netrin ligand. The chain is Netrin receptor UNC5A (Unc5a) from Rattus norvegicus (Rat).